The sequence spans 402 residues: Acetate kinase (402 aa).

Asn7 contributes to the Mg(2+) binding site. Lys14 provides a ligand contact to ATP. Arg95 is a substrate binding site. Asp152 serves as the catalytic Proton donor/acceptor. Residues 212-216, 286-288, and 334-338 contribute to the ATP site; these read HLGNG, DMR, and GIGEN. Glu388 contacts Mg(2+).

It belongs to the acetokinase family. Homodimer. Requires Mg(2+) as cofactor. It depends on Mn(2+) as a cofactor.

It is found in the cytoplasm. The catalysed reaction is acetate + ATP = acetyl phosphate + ADP. The protein operates within metabolic intermediate biosynthesis; acetyl-CoA biosynthesis; acetyl-CoA from acetate: step 1/2. Its function is as follows. Catalyzes the formation of acetyl phosphate from acetate and ATP. Can also catalyze the reverse reaction. The protein is Acetate kinase of Nitratidesulfovibrio vulgaris (strain DP4) (Desulfovibrio vulgaris).